The primary structure comprises 82 residues: Small ribosomal subunit protein bS16 (82 aa).

Belongs to the bacterial ribosomal protein bS16 family.

The protein is Small ribosomal subunit protein bS16 of Haemophilus influenzae (strain 86-028NP).